The sequence spans 154 residues: Deoxyuridine 5'-triphosphate nucleotidohydrolase (154 aa).

Residues arginine 72–glycine 74, asparagine 85, leucine 89–aspartate 91, and methionine 99 each bind substrate.

This sequence belongs to the dUTPase family. The cofactor is Mg(2+).

It catalyses the reaction dUTP + H2O = dUMP + diphosphate + H(+). The protein operates within pyrimidine metabolism; dUMP biosynthesis; dUMP from dCTP (dUTP route): step 2/2. Its function is as follows. This enzyme is involved in nucleotide metabolism: it produces dUMP, the immediate precursor of thymidine nucleotides and it decreases the intracellular concentration of dUTP so that uracil cannot be incorporated into DNA. The chain is Deoxyuridine 5'-triphosphate nucleotidohydrolase from Psychrobacter sp. (strain PRwf-1).